The sequence spans 949 residues: Glycine dehydrogenase (decarboxylating) (949 aa).

Position 700 is an N6-(pyridoxal phosphate)lysine (K700).

It belongs to the GcvP family. In terms of assembly, the glycine cleavage system is composed of four proteins: P, T, L and H. The cofactor is pyridoxal 5'-phosphate.

It catalyses the reaction N(6)-[(R)-lipoyl]-L-lysyl-[glycine-cleavage complex H protein] + glycine + H(+) = N(6)-[(R)-S(8)-aminomethyldihydrolipoyl]-L-lysyl-[glycine-cleavage complex H protein] + CO2. Functionally, the glycine cleavage system catalyzes the degradation of glycine. The P protein binds the alpha-amino group of glycine through its pyridoxal phosphate cofactor; CO(2) is released and the remaining methylamine moiety is then transferred to the lipoamide cofactor of the H protein. In Flavobacterium johnsoniae (strain ATCC 17061 / DSM 2064 / JCM 8514 / BCRC 14874 / CCUG 350202 / NBRC 14942 / NCIMB 11054 / UW101) (Cytophaga johnsonae), this protein is Glycine dehydrogenase (decarboxylating).